Here is a 236-residue protein sequence, read N- to C-terminus: 2-C-methyl-D-erythritol 4-phosphate cytidylyltransferase (236 aa).

This sequence belongs to the IspD/TarI cytidylyltransferase family. IspD subfamily.

It catalyses the reaction 2-C-methyl-D-erythritol 4-phosphate + CTP + H(+) = 4-CDP-2-C-methyl-D-erythritol + diphosphate. It participates in isoprenoid biosynthesis; isopentenyl diphosphate biosynthesis via DXP pathway; isopentenyl diphosphate from 1-deoxy-D-xylulose 5-phosphate: step 2/6. In terms of biological role, catalyzes the formation of 4-diphosphocytidyl-2-C-methyl-D-erythritol from CTP and 2-C-methyl-D-erythritol 4-phosphate (MEP). This is 2-C-methyl-D-erythritol 4-phosphate cytidylyltransferase from Pseudomonas savastanoi pv. phaseolicola (strain 1448A / Race 6) (Pseudomonas syringae pv. phaseolicola (strain 1448A / Race 6)).